The chain runs to 172 residues: Interferon tau-3 (172 aa).

2 cysteine pairs are disulfide-bonded: cysteine 1-cysteine 99 and cysteine 29-cysteine 139.

This sequence belongs to the alpha/beta interferon family. IFN-alphaII subfamily. In terms of tissue distribution, constitutively and exclusively expressed in the mononuclear cells of the extraembryonic trophectoderm.

The protein localises to the secreted. Paracrine hormone primarily responsible for maternal recognition of pregnancy. Interacts with endometrial receptors, probably type I interferon receptors, and blocks estrogen receptor expression, preventing the estrogen-induced increase in oxytocin receptor expression in the endometrium. This results in the suppression of the pulsatile endometrial release of the luteolytic hormone prostaglandin F2-alpha, hindering the regression of the corpus luteum (luteolysis) and therefore a return to ovarian cyclicity. This, and a possible direct effect of IFN-tau on prostaglandin synthesis, leads in turn to continued ovarian progesterone secretion, which stimulates the secretion by the endometrium of the nutrients required for the growth of the conceptus. In summary, displays particularly high antiviral and antiproliferative potency concurrently with particular weak cytotoxicity, high antiluteolytic activity and immunomodulatory properties. In contrast with other IFNs, IFN-tau is not virally inducible. The chain is Interferon tau-3 (IFNT3) from Ovis aries (Sheep).